The chain runs to 170 residues: MKILVIQGPNLNMLGHRDPRLYGMVTLDQIHEIMQTFVKQGNLDVELEFFQTNFEGEIIDKIQESVGSDYEGIIINPGAFSHTSIAIADAIMLAGKPVIEVHLTNIQAREEFRKNSYTGAACGGVIMGFGPLGYNMALMAMVNILAEMKAFQEAQKNNPNNPNNPINNQK.

The Proton acceptor role is filled by tyrosine 22. Substrate is bound by residues asparagine 76, histidine 82, and aspartate 89. The active-site Proton donor is the histidine 102. Substrate is bound by residues 103–104 and arginine 113; that span reads LT.

This sequence belongs to the type-II 3-dehydroquinase family. Homododecamer.

The catalysed reaction is 3-dehydroquinate = 3-dehydroshikimate + H2O. It functions in the pathway metabolic intermediate biosynthesis; chorismate biosynthesis; chorismate from D-erythrose 4-phosphate and phosphoenolpyruvate: step 3/7. Its function is as follows. Catalyzes a trans-dehydration via an enolate intermediate. The protein is 3-dehydroquinate dehydratase (aroQ) of Helicobacter pylori (strain J99 / ATCC 700824) (Campylobacter pylori J99).